The chain runs to 1028 residues: Pro-apoptotic serine protease nma111 (1028 aa).

The tract at residues 1 to 46 (MDLNGETSTKRKRSSVAAPAERPAKHLKPGNSTLTPGDATPANGTV) is disordered. The tract at residues 82-266 (VVSIHFCQTC…AATDYFLPLD (185 aa)) is serine protease. Active-site charge relay system residues include H120, D151, and S233. 2 consecutive PDZ domains span residues 289–374 (QWIL…LLVQ) and 876–957 (VFCG…VTFD). Over residues 991 to 1001 (SHERDRHKDGI) the composition is skewed to basic and acidic residues. The interval 991–1028 (SHERDRHKDGITPDAANLNPDAMDEVYEEVSDVEPEVD) is disordered. Over residues 1012–1028 (AMDEVYEEVSDVEPEVD) the composition is skewed to acidic residues.

It belongs to the peptidase S1C family.

It is found in the nucleus. Nuclear serine protease which mediates apoptosis. The chain is Pro-apoptotic serine protease nma111 (nma111) from Aspergillus fumigatus (strain ATCC MYA-4609 / CBS 101355 / FGSC A1100 / Af293) (Neosartorya fumigata).